Consider the following 502-residue polypeptide: Na(+)/H(+) antiporter NhaB (502 aa).

The next 11 helical transmembrane spans lie at 27 to 49 (AFLV…VLIL), 66 to 86 (PGGL…ESVF), 95 to 115 (VILL…LLLY), 128 to 148 (IVLS…LDAL), 149 to 169 (TVTA…HQFA), 241 to 261 (FFLQ…VTCI), 299 to 318 (IAAL…SLAL), 350 to 370 (FEEA…VAVI), 394 to 414 (MFFI…VATV), 450 to 470 (ATPN…APLI), and 477 to 497 (MVLM…IAVY).

This sequence belongs to the NhaB Na(+)/H(+) (TC 2.A.34) antiporter family.

It localises to the cell inner membrane. The catalysed reaction is 2 Na(+)(in) + 3 H(+)(out) = 2 Na(+)(out) + 3 H(+)(in). Na(+)/H(+) antiporter that extrudes sodium in exchange for external protons. This Teredinibacter turnerae (strain ATCC 39867 / T7901) protein is Na(+)/H(+) antiporter NhaB.